We begin with the raw amino-acid sequence, 927 residues long: Probable RNA-dependent RNA polymerase 4 (927 aa).

Positions 98–135 (GESPVQFPRTPGKKSCRASQAEVSLDREDPSPKFLRGD) are disordered. Basic and acidic residues predominate over residues 121-135 (SLDREDPSPKFLRGD).

This sequence belongs to the RdRP family.

The enzyme catalyses RNA(n) + a ribonucleoside 5'-triphosphate = RNA(n+1) + diphosphate. Probably involved in the RNA silencing pathway and required for the generation of small interfering RNAs (siRNAs). The polypeptide is Probable RNA-dependent RNA polymerase 4 (RDR4) (Arabidopsis thaliana (Mouse-ear cress)).